The following is a 288-amino-acid chain: RELT-like protein 1 (288 aa).

Positions 1-23 (MAPPAASGIPSIAPSLGPTAVWL) are cleaved as a signal peptide. The Extracellular portion of the chain corresponds to 24–57 (GNRSDLGDVQALASRDLPTTTVTAGNNNKPEHLE). An N-linked (GlcNAc...) asparagine glycan is attached at Asn-25. A helical transmembrane segment spans residues 58-78 (YVAFVLVPVFFIMGLLGILIC). The Cytoplasmic segment spans residues 79-288 (HVLKKKGYRC…EGTQERRSSE (210 aa)). Disordered stretches follow at residues 145 to 172 (FEPE…GAAS) and 237 to 288 (HKSN…RSSE). Residues 152 to 172 (SPNAPGSPTSPGSPLSPGAAS) show a composition bias toward low complexity. Basic and acidic residues predominate over residues 237–246 (HKSNSKERKS).

It belongs to the RELT family.

It localises to the cell membrane. The polypeptide is RELT-like protein 1 (RELL1) (Gallus gallus (Chicken)).